The primary structure comprises 73 residues: Homeodomain-only protein (73 aa).

Residues 3–62 (AETASGPTEDQVEILEYNFNKVDKHPDSTTLCLIAAEAGLSEEETQKWFKQRLAKWRRSE) constitute a DNA-binding region (homeobox; degenerate).

Interacts with serum response factor (SRF). Component of a large complex containing histone deacetylases such as HDAC2. Interacts with the acetylated forms of HSPA1A and HSPA1B. Interacts with HSPA8. Widely expressed. Expressed in the heart, brain, placenta, lung, skeletal and smooth muscles, uterus, urinary bladder, kidney and spleen. Down-regulated in some types of cancer such as lung cancer, choriocarcinoma, head and neck squamous cell carcinoma and oral squamous cell carcinoma.

It is found in the nucleus. Its subcellular location is the cytoplasm. In terms of biological role, atypical homeodomain protein which does not bind DNA and is required to modulate cardiac growth and development. Acts via its interaction with SRF, thereby modulating the expression of SRF-dependent cardiac-specific genes and cardiac development. Prevents SRF-dependent transcription either by inhibiting SRF binding to DNA or by recruiting histone deacetylase (HDAC) proteins that prevent transcription by SRF. Overexpression causes cardiac hypertrophy. May act as a tumor suppressor. Acts as a co-chaperone for HSPA1A and HSPA1B chaperone proteins and assists in chaperone-mediated protein refolding. The protein is Homeodomain-only protein (HOPX) of Homo sapiens (Human).